The following is a 107-amino-acid chain: UPF0145 protein PC1_1703 (107 aa).

It belongs to the UPF0145 family.

This chain is UPF0145 protein PC1_1703, found in Pectobacterium carotovorum subsp. carotovorum (strain PC1).